The chain runs to 370 residues: CCA-adding enzyme (370 aa).

ATP contacts are provided by Gly8 and Arg11. CTP contacts are provided by Gly8 and Arg11. Mg(2+)-binding residues include Asp21 and Asp23. Residues Arg91, Arg137, and Arg140 each contribute to the ATP site. CTP-binding residues include Arg91, Arg137, and Arg140.

The protein belongs to the tRNA nucleotidyltransferase/poly(A) polymerase family. Bacterial CCA-adding enzyme type 2 subfamily. The cofactor is Mg(2+).

It carries out the reaction a tRNA precursor + 2 CTP + ATP = a tRNA with a 3' CCA end + 3 diphosphate. It catalyses the reaction a tRNA with a 3' CCA end + 2 CTP + ATP = a tRNA with a 3' CCACCA end + 3 diphosphate. Its function is as follows. Catalyzes the addition and repair of the essential 3'-terminal CCA sequence in tRNAs without using a nucleic acid template. Adds these three nucleotides in the order of C, C, and A to the tRNA nucleotide-73, using CTP and ATP as substrates and producing inorganic pyrophosphate. tRNA 3'-terminal CCA addition is required both for tRNA processing and repair. Also involved in tRNA surveillance by mediating tandem CCA addition to generate a CCACCA at the 3' terminus of unstable tRNAs. While stable tRNAs receive only 3'-terminal CCA, unstable tRNAs are marked with CCACCA and rapidly degraded. This is CCA-adding enzyme from Pseudomonas putida (strain W619).